Reading from the N-terminus, the 233-residue chain is V-type proton ATPase subunit E (233 aa).

The protein belongs to the V-ATPase E subunit family. As to quaternary structure, V-ATPase is a heteromultimeric enzyme composed of a peripheral catalytic V1 complex (components A to H) attached to an integral membrane V0 proton pore complex (components: a, c, c', c'' and d).

Subunit of the peripheral V1 complex of vacuolar ATPase essential for assembly or catalytic function. V-ATPase is responsible for acidifying a variety of intracellular compartments in eukaryotic cells. The protein is V-type proton ATPase subunit E (vatE) of Dictyostelium discoideum (Social amoeba).